Reading from the N-terminus, the 1480-residue chain is UDP-N-acetylglucosamine--peptide N-acetylglucosaminyltransferase (1480 aa).

TPR repeat units lie at residues 38 to 71 (IFLY…SKQK), 113 to 146 (VQVL…STSN), 176 to 209 (ATIL…IKDP), and 288 to 321 (STIC…QPSF). Residues 468–485 (PQEKESPKSDKIASEKPL) show a composition bias toward basic and acidic residues. The disordered stretch occupies residues 468–497 (PQEKESPKSDKIASEKPLVESNPGRSRTPS). TPR repeat units follow at residues 613–646 (YEPF…NPRF) and 648–680 (DGYL…DPDN). Positions 1093–1128 (LSLDGSDATSSSVDSGIGSRTHSEAPIGGGDKDEGA) are disordered. Polar residues predominate over residues 1099–1112 (DATSSSVDSGIGSR). Residues Gln1269, Lys1272, 1333-1336 (HIRR), 1351-1353 (GST), and Asp1357 each bind UDP.

The protein belongs to the glycosyltransferase 41 family. O-GlcNAc transferase subfamily.

Its subcellular location is the cytoplasm. It is found in the nucleus. It carries out the reaction L-seryl-[protein] + UDP-N-acetyl-alpha-D-glucosamine = 3-O-(N-acetyl-beta-D-glucosaminyl)-L-seryl-[protein] + UDP + H(+). It catalyses the reaction L-threonyl-[protein] + UDP-N-acetyl-alpha-D-glucosamine = 3-O-(N-acetyl-beta-D-glucosaminyl)-L-threonyl-[protein] + UDP + H(+). Its pathway is protein modification; protein glycosylation. Catalyzes the transfer of a single N-acetylglucosamine from UDP-GlcNAc to a serine or threonine residue in cytoplasmic and nuclear proteins resulting in their modification with a beta-linked N-acetylglucosamine (O-GlcNAc). This Giardia intestinalis (strain ATCC 50803 / WB clone C6) (Giardia lamblia) protein is UDP-N-acetylglucosamine--peptide N-acetylglucosaminyltransferase.